A 124-amino-acid polypeptide reads, in one-letter code: Small ribosomal subunit protein uS12 (124 aa).

The interval 1–32 is disordered; it reads MPTIQQLVRKGRQDKVEKTKTPALKGSPQRRG. Residues 11-20 show a composition bias toward basic and acidic residues; that stretch reads GRQDKVEKTK. The residue at position 89 (Asp-89) is a 3-methylthioaspartic acid.

It belongs to the universal ribosomal protein uS12 family. In terms of assembly, part of the 30S ribosomal subunit. Contacts proteins S8 and S17. May interact with IF1 in the 30S initiation complex.

In terms of biological role, with S4 and S5 plays an important role in translational accuracy. Its function is as follows. Interacts with and stabilizes bases of the 16S rRNA that are involved in tRNA selection in the A site and with the mRNA backbone. Located at the interface of the 30S and 50S subunits, it traverses the body of the 30S subunit contacting proteins on the other side and probably holding the rRNA structure together. The combined cluster of proteins S8, S12 and S17 appears to hold together the shoulder and platform of the 30S subunit. In Frankia alni (strain DSM 45986 / CECT 9034 / ACN14a), this protein is Small ribosomal subunit protein uS12.